The primary structure comprises 176 residues: Orotate phosphoribosyltransferase (176 aa).

5-phospho-alpha-D-ribose 1-diphosphate-binding positions include Arg-90, Lys-91, Lys-94, and 116–124 (EDVTTTGGS). Residues Thr-120 and Arg-148 each coordinate orotate.

It belongs to the purine/pyrimidine phosphoribosyltransferase family. PyrE subfamily. Homodimer. The cofactor is Mg(2+).

It carries out the reaction orotidine 5'-phosphate + diphosphate = orotate + 5-phospho-alpha-D-ribose 1-diphosphate. Its pathway is pyrimidine metabolism; UMP biosynthesis via de novo pathway; UMP from orotate: step 1/2. Functionally, catalyzes the transfer of a ribosyl phosphate group from 5-phosphoribose 1-diphosphate to orotate, leading to the formation of orotidine monophosphate (OMP). The polypeptide is Orotate phosphoribosyltransferase (Methanocaldococcus jannaschii (strain ATCC 43067 / DSM 2661 / JAL-1 / JCM 10045 / NBRC 100440) (Methanococcus jannaschii)).